The following is a 133-amino-acid chain: UPF0102 protein Fnod_1509 (133 aa).

It belongs to the UPF0102 family.

This is UPF0102 protein Fnod_1509 from Fervidobacterium nodosum (strain ATCC 35602 / DSM 5306 / Rt17-B1).